Consider the following 71-residue polypeptide: Large ribosomal subunit protein bL31 (71 aa).

Zn(2+)-binding residues include Cys-16, Cys-18, Cys-38, and Cys-41.

The protein belongs to the bacterial ribosomal protein bL31 family. Type A subfamily. As to quaternary structure, part of the 50S ribosomal subunit. Zn(2+) is required as a cofactor.

Binds the 23S rRNA. The chain is Large ribosomal subunit protein bL31 from Neisseria gonorrhoeae (strain ATCC 700825 / FA 1090).